The following is a 331-amino-acid chain: Ketol-acid reductoisomerase (NADP(+)) (331 aa).

Residues 2-182 form the KARI N-terminal Rossmann domain; that stretch reads AKIYTDKDAS…GATRAGVIET (181 aa). NADP(+) contacts are provided by residues 25–28, arginine 48, serine 53, and 83–86; these read YGIQ and DMEQ. Histidine 108 is an active-site residue. Glycine 134 is an NADP(+) binding site. Residues 183 to 328 form the KARI C-terminal knotted domain; the sequence is TFAEETETDL…AEMRKLLFGR (146 aa). Mg(2+) is bound by residues aspartate 191, glutamate 195, glutamate 227, and glutamate 231. A substrate-binding site is contributed by serine 252.

Belongs to the ketol-acid reductoisomerase family. Requires Mg(2+) as cofactor.

It carries out the reaction (2R)-2,3-dihydroxy-3-methylbutanoate + NADP(+) = (2S)-2-acetolactate + NADPH + H(+). The enzyme catalyses (2R,3R)-2,3-dihydroxy-3-methylpentanoate + NADP(+) = (S)-2-ethyl-2-hydroxy-3-oxobutanoate + NADPH + H(+). The protein operates within amino-acid biosynthesis; L-isoleucine biosynthesis; L-isoleucine from 2-oxobutanoate: step 2/4. It functions in the pathway amino-acid biosynthesis; L-valine biosynthesis; L-valine from pyruvate: step 2/4. In terms of biological role, involved in the biosynthesis of branched-chain amino acids (BCAA). Catalyzes an alkyl-migration followed by a ketol-acid reduction of (S)-2-acetolactate (S2AL) to yield (R)-2,3-dihydroxy-isovalerate. In the isomerase reaction, S2AL is rearranged via a Mg-dependent methyl migration to produce 3-hydroxy-3-methyl-2-ketobutyrate (HMKB). In the reductase reaction, this 2-ketoacid undergoes a metal-dependent reduction by NADPH to yield (R)-2,3-dihydroxy-isovalerate. The sequence is that of Ketol-acid reductoisomerase (NADP(+)) from Pyrobaculum islandicum (strain DSM 4184 / JCM 9189 / GEO3).